The chain runs to 177 residues: Transcription antitermination protein NusB (177 aa).

The tract at residues Met1–Ser36 is disordered.

This sequence belongs to the NusB family.

Involved in transcription antitermination. Required for transcription of ribosomal RNA (rRNA) genes. Binds specifically to the boxA antiterminator sequence of the ribosomal RNA (rrn) operons. In Albidiferax ferrireducens (strain ATCC BAA-621 / DSM 15236 / T118) (Rhodoferax ferrireducens), this protein is Transcription antitermination protein NusB.